The chain runs to 389 residues: MSEYLFTSESVSEGHPDKVADQVSDAILDAILAQDPKARVAAETLVNTGLCVLAGEITTTAQVDYIKVARETIKRIGYNSSELGFDANGCAVGVYYDQQSPDIAQGVNEGEGIDLNQGAGDQGLMFGYACDETPTLMPFAIYYSHRLMQRQSELRKDGRLPWLRPDAKAQLTVVYDSETGKVKRIDTVVLSTQHDPAISQEELSKAVIEQIIKPVLPPELLTDETKYLINPTGRFVIGGPQGDCGLTGRKIIVDTYGGAAPHGGGAFSGKDPSKVDRSAAYACRYVAKNIVAAGLATQCQIQVSYAIGVAEPTSISIDTFGTGKISEEKLIALVCEHFDLRPKGIVQMLDLLRPIYGKSAAYGHFGREEPEFTWERTDKAASLKAAAGL.

H15 is an ATP binding site. Residue D17 coordinates Mg(2+). Residue E43 participates in K(+) binding. The L-methionine site is built by E56 and Q99. The interval 99 to 109 (QSPDIAQGVNE) is flexible loop. ATP is bound by residues 166–168 (DAK), 234–235 (RF), D243, 249–250 (RK), A266, and K270. D243 lines the L-methionine pocket. K274 is an L-methionine binding site.

It belongs to the AdoMet synthase family. In terms of assembly, homotetramer; dimer of dimers. It depends on Mg(2+) as a cofactor. K(+) serves as cofactor.

It localises to the cytoplasm. It catalyses the reaction L-methionine + ATP + H2O = S-adenosyl-L-methionine + phosphate + diphosphate. Its pathway is amino-acid biosynthesis; S-adenosyl-L-methionine biosynthesis; S-adenosyl-L-methionine from L-methionine: step 1/1. In terms of biological role, catalyzes the formation of S-adenosylmethionine (AdoMet) from methionine and ATP. The overall synthetic reaction is composed of two sequential steps, AdoMet formation and the subsequent tripolyphosphate hydrolysis which occurs prior to release of AdoMet from the enzyme. The protein is S-adenosylmethionine synthase of Neisseria gonorrhoeae (strain ATCC 700825 / FA 1090).